The following is a 117-amino-acid chain: LIM and senescent cell antigen-like-containing domain protein 3 (117 aa).

The LIM zinc-binding domain occupies A70–T117.

In terms of tissue distribution, detected in testis.

The protein localises to the cytoplasm. The protein is LIM and senescent cell antigen-like-containing domain protein 3 (LIMS3) of Homo sapiens (Human).